The following is a 159-amino-acid chain: MRITVVCVGKIKEKFYTQAVDEYSKRLSRYCKLDIVELPDEKTPDNASDVVNEQIKNKEGERILSAIKDDAYVCALAIEGKMLDSVELSEKIDRLGIDGTSNITFVIGGSLGLADAVLKRADYKLSFSKMTFPHQLMRVILLEQIYRAYRIMKNEPYHK.

S-adenosyl-L-methionine contacts are provided by residues Leu76, Gly108, and 127-132; that span reads FSKMTF.

The protein belongs to the RNA methyltransferase RlmH family. As to quaternary structure, homodimer.

It is found in the cytoplasm. The catalysed reaction is pseudouridine(1915) in 23S rRNA + S-adenosyl-L-methionine = N(3)-methylpseudouridine(1915) in 23S rRNA + S-adenosyl-L-homocysteine + H(+). Its function is as follows. Specifically methylates the pseudouridine at position 1915 (m3Psi1915) in 23S rRNA. This is Ribosomal RNA large subunit methyltransferase H from Lachnospira eligens (strain ATCC 27750 / DSM 3376 / VPI C15-48 / C15-B4) (Eubacterium eligens).